Consider the following 328-residue polypeptide: DNA-directed RNA polymerase subunit alpha (328 aa).

The segment at 1–234 is alpha N-terminal domain (alpha-NTD); the sequence is MQNSPTEYLK…GQLSVFADLE (234 aa). Positions 248–328 are alpha C-terminal domain (alpha-CTD); sequence VDPILLRPVD…NWPPAGLEKV (81 aa).

Belongs to the RNA polymerase alpha chain family. In terms of assembly, homodimer. The RNAP catalytic core consists of 2 alpha, 1 beta, 1 beta' and 1 omega subunit. When a sigma factor is associated with the core the holoenzyme is formed, which can initiate transcription.

It carries out the reaction RNA(n) + a ribonucleoside 5'-triphosphate = RNA(n+1) + diphosphate. DNA-dependent RNA polymerase catalyzes the transcription of DNA into RNA using the four ribonucleoside triphosphates as substrates. This is DNA-directed RNA polymerase subunit alpha from Methylobacillus flagellatus (strain ATCC 51484 / DSM 6875 / VKM B-1610 / KT).